A 186-amino-acid chain; its full sequence is Oligoribonuclease (186 aa).

In terms of domain architecture, Exonuclease spans 8-171 (LIWIDLEMTG…DDIRESIAEL (164 aa)). Y129 is a catalytic residue.

This sequence belongs to the oligoribonuclease family.

It localises to the cytoplasm. Functionally, 3'-to-5' exoribonuclease specific for small oligoribonucleotides. The sequence is that of Oligoribonuclease from Mannheimia succiniciproducens (strain KCTC 0769BP / MBEL55E).